Consider the following 399-residue polypeptide: Argininosuccinate synthase (399 aa).

Position 8–16 (8–16 (AYSGGLDTT)) interacts with ATP. Y87 serves as a coordination point for L-citrulline. G117 serves as a coordination point for ATP. Positions 119, 123, and 124 each coordinate L-aspartate. N123 serves as a coordination point for L-citrulline. L-citrulline is bound by residues R127, S175, E259, and Y271.

It belongs to the argininosuccinate synthase family. Type 1 subfamily. As to quaternary structure, homotetramer.

The protein resides in the cytoplasm. The catalysed reaction is L-citrulline + L-aspartate + ATP = 2-(N(omega)-L-arginino)succinate + AMP + diphosphate + H(+). The protein operates within amino-acid biosynthesis; L-arginine biosynthesis; L-arginine from L-ornithine and carbamoyl phosphate: step 2/3. The sequence is that of Argininosuccinate synthase from Corynebacterium urealyticum (strain ATCC 43042 / DSM 7109).